A 151-amino-acid chain; its full sequence is Transcriptional regulator MraZ (151 aa).

SpoVT-AbrB domains follow at residues 5-52 (IHQV…PLSE) and 81-124 (ATDL…SQEE).

Belongs to the MraZ family. Forms oligomers.

The protein resides in the cytoplasm. Its subcellular location is the nucleoid. The protein is Transcriptional regulator MraZ of Marinomonas sp. (strain MWYL1).